The primary structure comprises 750 residues: Polyribonucleotide nucleotidyltransferase (750 aa).

Positions 523 and 529 each coordinate Mg(2+). Positions 589-648 constitute a KH domain; the sequence is PRVTSISIPVDKIGEVIGPKGKMINSITEETGAEITIEDDGTIYVGAADGPSAEAAIDKI. Positions 660–729 constitute an S1 motif domain; sequence GERFLGTVVK…SRGKISLVVV (70 aa).

It belongs to the polyribonucleotide nucleotidyltransferase family. Mg(2+) is required as a cofactor.

The protein resides in the cytoplasm. It carries out the reaction RNA(n+1) + phosphate = RNA(n) + a ribonucleoside 5'-diphosphate. Involved in mRNA degradation. Catalyzes the phosphorolysis of single-stranded polyribonucleotides processively in the 3'- to 5'-direction. The protein is Polyribonucleotide nucleotidyltransferase of Saccharopolyspora erythraea (strain ATCC 11635 / DSM 40517 / JCM 4748 / NBRC 13426 / NCIMB 8594 / NRRL 2338).